Reading from the N-terminus, the 197-residue chain is NADH-quinone oxidoreductase subunit C (197 aa).

This sequence belongs to the complex I 30 kDa subunit family. NDH-1 is composed of 14 different subunits. Subunits NuoB, C, D, E, F, and G constitute the peripheral sector of the complex.

The protein localises to the cell inner membrane. It carries out the reaction a quinone + NADH + 5 H(+)(in) = a quinol + NAD(+) + 4 H(+)(out). Its function is as follows. NDH-1 shuttles electrons from NADH, via FMN and iron-sulfur (Fe-S) centers, to quinones in the respiratory chain. The immediate electron acceptor for the enzyme in this species is believed to be ubiquinone. Couples the redox reaction to proton translocation (for every two electrons transferred, four hydrogen ions are translocated across the cytoplasmic membrane), and thus conserves the redox energy in a proton gradient. This is NADH-quinone oxidoreductase subunit C from Neisseria meningitidis serogroup C (strain 053442).